Here is a 369-residue protein sequence, read N- to C-terminus: MRERISNAKRVVVKIGSSSLTNDEDGHTVDPNRINTIVNALQARMEAGSDLIVVSSGAVAAGMAPLGLSTRPTELAVKQAAAAVGQVHLMHQWGRSFARYGRPIGQVLLTAADAGKRDRARNAQRTIDKLRILGAVPIVNENDTVATTGVNFGDNDRLAAIVAHLVSADALVLLSDVDGLFDKNPTDPTAKFISEVRDGNDLKGVIAGDGGKVGTGGMASKVSAARLASRSGVPVLLTSAANIGPALEDAQVGTVFHPKDNRLSAWKFWALYAADTAGKIRLDDGAVEAVTSGGKSLLAVGITEIIGDFQQGEIVEILGPAGQIIGRGEVSYDSDTLQSMVGMQTQDLPDGMQRPVVHADYLSNYASRA.

Lys14 contacts ATP. Positions 56, 143, and 155 each coordinate substrate. ATP-binding positions include 175 to 176 and 215 to 221; these read SD and TGGMASK. The PUA domain maps to 277–351; that stretch reads AGKIRLDDGA…GMQTQDLPDG (75 aa).

It belongs to the glutamate 5-kinase family.

It is found in the cytoplasm. It carries out the reaction L-glutamate + ATP = L-glutamyl 5-phosphate + ADP. The protein operates within amino-acid biosynthesis; L-proline biosynthesis; L-glutamate 5-semialdehyde from L-glutamate: step 1/2. Catalyzes the transfer of a phosphate group to glutamate to form L-glutamate 5-phosphate. This is Glutamate 5-kinase from Corynebacterium glutamicum (strain ATCC 13032 / DSM 20300 / JCM 1318 / BCRC 11384 / CCUG 27702 / LMG 3730 / NBRC 12168 / NCIMB 10025 / NRRL B-2784 / 534).